A 259-amino-acid polypeptide reads, in one-letter code: MTLPPPADFVVAIPARYASKRLPGKPLQRIGNRPMIQHVAERALLAGARAVWVATDDARIAEAIAHLPGVHVAMTGTAHLSGTDRLAECARIAGWDEQTCVVNLQGDEPFAPAAGIGAVADLLQHSGAEMATLAAPVDSAHDLFDPNVVKLVRNARGDALYFSRAPIPWHRDSFASQRDSVPAEGQWLRHIGIYGYRAGFLQRFAAMPPGMLERIESLEQLRVMEAGYRIAVAVTPEPFPPGIDTPDDLARAQARVASA.

This sequence belongs to the KdsB family.

It localises to the cytoplasm. The enzyme catalyses 3-deoxy-alpha-D-manno-oct-2-ulosonate + CTP = CMP-3-deoxy-beta-D-manno-octulosonate + diphosphate. The protein operates within nucleotide-sugar biosynthesis; CMP-3-deoxy-D-manno-octulosonate biosynthesis; CMP-3-deoxy-D-manno-octulosonate from 3-deoxy-D-manno-octulosonate and CTP: step 1/1. It functions in the pathway bacterial outer membrane biogenesis; lipopolysaccharide biosynthesis. Its function is as follows. Activates KDO (a required 8-carbon sugar) for incorporation into bacterial lipopolysaccharide in Gram-negative bacteria. The chain is 3-deoxy-manno-octulosonate cytidylyltransferase from Xanthomonas oryzae pv. oryzae (strain KACC10331 / KXO85).